The primary structure comprises 597 residues: Elongation factor 4 (597 aa).

The tr-type G domain maps to 2-184; sequence QHIRNFSIIA…AIVARVPSPE (183 aa). Residues 14-19 and 131-134 each bind GTP; these read DHGKST and NKMD.

The protein belongs to the TRAFAC class translation factor GTPase superfamily. Classic translation factor GTPase family. LepA subfamily.

It localises to the cell inner membrane. It catalyses the reaction GTP + H2O = GDP + phosphate + H(+). Its function is as follows. Required for accurate and efficient protein synthesis under certain stress conditions. May act as a fidelity factor of the translation reaction, by catalyzing a one-codon backward translocation of tRNAs on improperly translocated ribosomes. Back-translocation proceeds from a post-translocation (POST) complex to a pre-translocation (PRE) complex, thus giving elongation factor G a second chance to translocate the tRNAs correctly. Binds to ribosomes in a GTP-dependent manner. The protein is Elongation factor 4 of Bordetella avium (strain 197N).